Reading from the N-terminus, the 205-residue chain is Recombination protein RecR (205 aa).

Residues 64–79 form a C4-type zinc finger; sequence CSRCYFITQGDLCAIC. Residues 87–182 form the Toprim domain; it reads RVICVVEEPL…RVTRLARGLP (96 aa).

The protein belongs to the RecR family.

Its function is as follows. May play a role in DNA repair. It seems to be involved in an RecBC-independent recombinational process of DNA repair. It may act with RecF and RecO. In Roseiflexus sp. (strain RS-1), this protein is Recombination protein RecR.